We begin with the raw amino-acid sequence, 445 residues long: DNA repair protein RadA (445 aa).

The segment at 10–27 (CSNCANISHKWSGQCFDC) adopts a C4-type zinc-finger fold. 90 to 97 (GEPGIGKS) provides a ligand contact to ATP. Positions 249–253 (KNRFG) match the RadA KNRFG motif motif. The interval 348 to 445 (EIYLSIAGGL…HLQDLKEIIK (98 aa)) is lon-protease-like.

The protein belongs to the RecA family. RadA subfamily.

In terms of biological role, DNA-dependent ATPase involved in processing of recombination intermediates, plays a role in repairing DNA breaks. Stimulates the branch migration of RecA-mediated strand transfer reactions, allowing the 3' invading strand to extend heteroduplex DNA faster. Binds ssDNA in the presence of ADP but not other nucleotides, has ATPase activity that is stimulated by ssDNA and various branched DNA structures, but inhibited by SSB. Does not have RecA's homology-searching function. The protein is DNA repair protein RadA of Rickettsia typhi (strain ATCC VR-144 / Wilmington).